The sequence spans 130 residues: Large ribosomal subunit protein bL17 (130 aa).

It belongs to the bacterial ribosomal protein bL17 family. As to quaternary structure, part of the 50S ribosomal subunit. Contacts protein L32.

This chain is Large ribosomal subunit protein bL17, found in Shewanella pealeana (strain ATCC 700345 / ANG-SQ1).